Consider the following 381-residue polypeptide: Chorismate synthase (381 aa).

The NADP(+) site is built by arginine 41 and arginine 47. FMN is bound by residues 127–129, 247–248, glycine 291, 306–310, and arginine 332; these read RAS, QA, and KPIPT.

Belongs to the chorismate synthase family. As to quaternary structure, homotetramer. The cofactor is FMNH2.

The enzyme catalyses 5-O-(1-carboxyvinyl)-3-phosphoshikimate = chorismate + phosphate. It participates in metabolic intermediate biosynthesis; chorismate biosynthesis; chorismate from D-erythrose 4-phosphate and phosphoenolpyruvate: step 7/7. Functionally, catalyzes the anti-1,4-elimination of the C-3 phosphate and the C-6 proR hydrogen from 5-enolpyruvylshikimate-3-phosphate (EPSP) to yield chorismate, which is the branch point compound that serves as the starting substrate for the three terminal pathways of aromatic amino acid biosynthesis. This reaction introduces a second double bond into the aromatic ring system. The protein is Chorismate synthase of Anaeromyxobacter dehalogenans (strain 2CP-1 / ATCC BAA-258).